The chain runs to 217 residues: Cytidylate kinase (217 aa).

9–17 (GPAGSGKTT) serves as a coordination point for ATP.

This sequence belongs to the cytidylate kinase family. Type 1 subfamily.

The protein localises to the cytoplasm. It carries out the reaction CMP + ATP = CDP + ADP. The enzyme catalyses dCMP + ATP = dCDP + ADP. The sequence is that of Cytidylate kinase from Thermosipho melanesiensis (strain DSM 12029 / CIP 104789 / BI429).